The primary structure comprises 101 residues: Small ribosomal subunit protein uS14 (101 aa).

Belongs to the universal ribosomal protein uS14 family. Part of the 30S ribosomal subunit. Contacts proteins S3 and S10.

In terms of biological role, binds 16S rRNA, required for the assembly of 30S particles and may also be responsible for determining the conformation of the 16S rRNA at the A site. This is Small ribosomal subunit protein uS14 from Paraburkholderia phytofirmans (strain DSM 17436 / LMG 22146 / PsJN) (Burkholderia phytofirmans).